The sequence spans 425 residues: RNA-binding protein L (425 aa).

The span at 1 to 20 (MQQPPSQPQPGMGGPPPPPQ) shows a compositional bias: pro residues. Residues 1–82 (MQQPPSQPQP…AAPPPQAMPA (82 aa)) are disordered. Residues 21–31 (GAAGQPPQWGA) are compositionally biased toward low complexity. Residues 32-80 (IPPPMPPHQYGAPPPQQPPAMWGQPPPQAHYGQVPPPQPYYAAPPPQAM) show a composition bias toward pro residues. RRM domains lie at 90-170 (KTLW…WASA), 180-259 (YTIF…PAAN), and 284-356 (TTIF…WGRS).

It belongs to the polyadenylate-binding RBP45 family. As to quaternary structure, interacts with RBP-P. Interacts with RAB5A.

The protein resides in the nucleus. It is found in the cytoplasm. Its function is as follows. RNA-binding protein that binds to a cis-localization element or zipcode, within the 5'-CDS of prolamine RNA. Binds strongly to glutelin and prolamin mRNAs, particularly to 3'-UTR and zipcode RNA. Recognizes and binds to glutelin zipcode RNA, which is required for proper mRNA localization to cisternal endoplasmic reticulum. Recognizes and binds to prolamin zipcode RNA, which is required for proper mRNA localization to the protein body endoplasmic reticulum that delimits the prolamine intracisternal inclusion granules. Required for the correct localization of glutelin and prolamine mRNA in endosperm cells during grain development. RBP-L and RBP-P form a quaternary complex with the membrane trafficking factors NSF and RAB5A. This quaternay complex carries glutelin mRNAs for active transport on endosomes to the cortical endoplasmic reticulum membrane, and enables endosome-mediated glutelin mRNA transport in endosperm cells. In Oryza sativa subsp. japonica (Rice), this protein is RNA-binding protein L.